Here is a 235-residue protein sequence, read N- to C-terminus: NAD-dependent protein deacylase (235 aa).

Residues methionine 1 to glutamate 235 form the Deacetylase sirtuin-type domain. Glycine 14–tryptophan 33 is an NAD(+) binding site. Substrate-binding residues include tyrosine 58 and arginine 61. Glutamine 95 to aspartate 98 lines the NAD(+) pocket. Catalysis depends on histidine 113, which acts as the Proton acceptor. Zn(2+) contacts are provided by cysteine 121, cysteine 124, cysteine 140, and cysteine 143. Residues glycine 180–serine 182, asparagine 204–lysine 206, and alanine 222 contribute to the NAD(+) site.

It belongs to the sirtuin family. Class III subfamily. The cofactor is Zn(2+).

It is found in the cytoplasm. The catalysed reaction is N(6)-acetyl-L-lysyl-[protein] + NAD(+) + H2O = 2''-O-acetyl-ADP-D-ribose + nicotinamide + L-lysyl-[protein]. It carries out the reaction N(6)-succinyl-L-lysyl-[protein] + NAD(+) + H2O = 2''-O-succinyl-ADP-D-ribose + nicotinamide + L-lysyl-[protein]. Functionally, NAD-dependent lysine deacetylase and desuccinylase that specifically removes acetyl and succinyl groups on target proteins. Modulates the activities of several proteins which are inactive in their acylated form. This Bdellovibrio bacteriovorus (strain ATCC 15356 / DSM 50701 / NCIMB 9529 / HD100) protein is NAD-dependent protein deacylase.